The primary structure comprises 392 residues: Phosphoglycerate kinase (392 aa).

Residues 19-21 (DFN), arginine 35, 58-61 (HMGR), arginine 117, and arginine 150 each bind substrate. ATP contacts are provided by residues lysine 201, glutamate 323, and 349-352 (GGDS).

This sequence belongs to the phosphoglycerate kinase family. Monomer.

The protein resides in the cytoplasm. The enzyme catalyses (2R)-3-phosphoglycerate + ATP = (2R)-3-phospho-glyceroyl phosphate + ADP. It participates in carbohydrate degradation; glycolysis; pyruvate from D-glyceraldehyde 3-phosphate: step 2/5. The polypeptide is Phosphoglycerate kinase (Desulfotalea psychrophila (strain LSv54 / DSM 12343)).